Consider the following 458-residue polypeptide: UDP-N-acetylmuramate--L-alanine ligase (458 aa).

115–121 (GSHGKTT) provides a ligand contact to ATP.

Belongs to the MurCDEF family.

It is found in the cytoplasm. It carries out the reaction UDP-N-acetyl-alpha-D-muramate + L-alanine + ATP = UDP-N-acetyl-alpha-D-muramoyl-L-alanine + ADP + phosphate + H(+). It participates in cell wall biogenesis; peptidoglycan biosynthesis. In terms of biological role, cell wall formation. This Anaeromyxobacter dehalogenans (strain 2CP-C) protein is UDP-N-acetylmuramate--L-alanine ligase.